Here is a 216-residue protein sequence, read N- to C-terminus: Ribose-5-phosphate isomerase A (216 aa).

Residues 26–29 (TGST), 79–82 (DGAD), and 92–95 (KGGG) each bind substrate. The active-site Proton acceptor is Glu101. Substrate is bound at residue Lys119.

This sequence belongs to the ribose 5-phosphate isomerase family. In terms of assembly, homodimer.

It catalyses the reaction aldehydo-D-ribose 5-phosphate = D-ribulose 5-phosphate. Its pathway is carbohydrate degradation; pentose phosphate pathway; D-ribose 5-phosphate from D-ribulose 5-phosphate (non-oxidative stage): step 1/1. Its function is as follows. Catalyzes the reversible conversion of ribose-5-phosphate to ribulose 5-phosphate. The protein is Ribose-5-phosphate isomerase A of Legionella pneumophila (strain Lens).